The primary structure comprises 542 residues: MAKDIKFNLDARDLLKKGVDELADAVKVTLGPKGRNVIIDKKFGAPQITKDGVTVAKEIELSDHFQNMGAQLVKEVASKTNDNAGDGTTTATVLAQSIINVGMKNVAAGANPMDLKRGIDKAVAKVVESLKKQSRAVGDDFGKIENVAKISANGDETIGSLIAEAMKKVKKEGVITIEESKGIETYVDVVEGMQFDRGYISSYFVTNTDKMEADLENPYILIHDKKISVLKDILPILEKTIQTGRPMLIIAEDIESEALATLVVNRLRGSLKVCAVKAPGFGDRRKEMLEDIAVLTGGVVISEEKGLKLEGVTIDMLGTAEKVTISKDNTVIVNGAGEKSAISARVSQIKTQIEKTTSDYDSEKLQERLAKLAGGVAVLYVGAPSEVEMKEKKDRVDDALSATRAAIEEGTVPGGGVAYVRAISILEGFKGINEDETTGIEIVKRAIEEPLRQIVENAGKEGAVIAQRVKEEKDDFGYNARTGIYEDLYVAGVIDPTKVARVALENAASIAGMLLTTECVITEVKEENPAPAMPPMGGGGMM.

ATP-binding positions include 29–32 (TLGP), lysine 50, 86–90 (DGTTT), glycine 415, and aspartate 495.

Belongs to the chaperonin (HSP60) family. In terms of assembly, forms a cylinder of 14 subunits composed of two heptameric rings stacked back-to-back. Interacts with the co-chaperonin GroES.

It is found in the cytoplasm. The catalysed reaction is ATP + H2O + a folded polypeptide = ADP + phosphate + an unfolded polypeptide.. In terms of biological role, together with its co-chaperonin GroES, plays an essential role in assisting protein folding. The GroEL-GroES system forms a nano-cage that allows encapsulation of the non-native substrate proteins and provides a physical environment optimized to promote and accelerate protein folding. The sequence is that of Chaperonin GroEL from Azobacteroides pseudotrichonymphae genomovar. CFP2.